We begin with the raw amino-acid sequence, 159 residues long: Phosphopantetheine adenylyltransferase (159 aa).

Threonine 10 is a substrate binding site. ATP is bound by residues 10–11 and histidine 18; that span reads TF. Lysine 42, methionine 74, and arginine 88 together coordinate substrate. ATP-binding positions include 89 to 91, glutamate 99, and 124 to 130; these read GLR and WSFISSS.

This sequence belongs to the bacterial CoaD family. Homohexamer. Requires Mg(2+) as cofactor.

Its subcellular location is the cytoplasm. The catalysed reaction is (R)-4'-phosphopantetheine + ATP + H(+) = 3'-dephospho-CoA + diphosphate. Its pathway is cofactor biosynthesis; coenzyme A biosynthesis; CoA from (R)-pantothenate: step 4/5. Its function is as follows. Reversibly transfers an adenylyl group from ATP to 4'-phosphopantetheine, yielding dephospho-CoA (dPCoA) and pyrophosphate. The chain is Phosphopantetheine adenylyltransferase from Escherichia coli (strain SMS-3-5 / SECEC).